Here is a 139-residue protein sequence, read N- to C-terminus: Putative translationally-controlled tumor protein-like protein TPT1P8 (139 aa).

In terms of domain architecture, TCTP spans 1-139; sequence MIIFQDLISH…KTTSSLLVKT (139 aa). Residues 40-51 show a composition bias toward polar residues; that stretch reads TGNTDDSLIGRN. A disordered region spans residues 40-60; sequence TGNTDDSLIGRNSSSESTEDE.

It belongs to the TCTP family.

The sequence is that of Putative translationally-controlled tumor protein-like protein TPT1P8 (TPT1P8) from Homo sapiens (Human).